A 199-amino-acid polypeptide reads, in one-letter code: NADH-quinone oxidoreductase subunit C (199 aa).

Belongs to the complex I 30 kDa subunit family. As to quaternary structure, NDH-1 is composed of 14 different subunits. Subunits NuoB, C, D, E, F, and G constitute the peripheral sector of the complex.

Its subcellular location is the cell inner membrane. The catalysed reaction is a quinone + NADH + 5 H(+)(in) = a quinol + NAD(+) + 4 H(+)(out). Its function is as follows. NDH-1 shuttles electrons from NADH, via FMN and iron-sulfur (Fe-S) centers, to quinones in the respiratory chain. The immediate electron acceptor for the enzyme in this species is believed to be ubiquinone. Couples the redox reaction to proton translocation (for every two electrons transferred, four hydrogen ions are translocated across the cytoplasmic membrane), and thus conserves the redox energy in a proton gradient. The polypeptide is NADH-quinone oxidoreductase subunit C (Roseobacter denitrificans (strain ATCC 33942 / OCh 114) (Erythrobacter sp. (strain OCh 114))).